Reading from the N-terminus, the 87-residue chain is HssA/B-like protein 57 (87 aa).

This sequence belongs to the hssA/B family.

This chain is HssA/B-like protein 57 (hssl57), found in Dictyostelium discoideum (Social amoeba).